Consider the following 378-residue polypeptide: UPF0754 membrane protein BCA_0919 (378 aa).

Helical transmembrane passes span 1-21 (MNIW…GGFT) and 357-377 (YLGA…LLFL).

Belongs to the UPF0754 family.

The protein resides in the cell membrane. The chain is UPF0754 membrane protein BCA_0919 from Bacillus cereus (strain 03BB102).